Consider the following 494-residue polypeptide: Protein nucleotidyltransferase YdiU (494 aa).

8 residues coordinate ATP: glycine 99, glycine 101, arginine 102, lysine 118, aspartate 130, glycine 131, arginine 181, and arginine 188. Catalysis depends on aspartate 261, which acts as the Proton acceptor. Mg(2+) is bound by residues asparagine 262 and aspartate 271. Aspartate 271 provides a ligand contact to ATP.

Belongs to the SELO family. Mg(2+) serves as cofactor. Mn(2+) is required as a cofactor.

The enzyme catalyses L-seryl-[protein] + ATP = 3-O-(5'-adenylyl)-L-seryl-[protein] + diphosphate. The catalysed reaction is L-threonyl-[protein] + ATP = 3-O-(5'-adenylyl)-L-threonyl-[protein] + diphosphate. It carries out the reaction L-tyrosyl-[protein] + ATP = O-(5'-adenylyl)-L-tyrosyl-[protein] + diphosphate. It catalyses the reaction L-histidyl-[protein] + UTP = N(tele)-(5'-uridylyl)-L-histidyl-[protein] + diphosphate. The enzyme catalyses L-seryl-[protein] + UTP = O-(5'-uridylyl)-L-seryl-[protein] + diphosphate. The catalysed reaction is L-tyrosyl-[protein] + UTP = O-(5'-uridylyl)-L-tyrosyl-[protein] + diphosphate. Nucleotidyltransferase involved in the post-translational modification of proteins. It can catalyze the addition of adenosine monophosphate (AMP) or uridine monophosphate (UMP) to a protein, resulting in modifications known as AMPylation and UMPylation. This chain is Protein nucleotidyltransferase YdiU, found in Variovorax paradoxus (strain S110).